The primary structure comprises 288 residues: MNVVTHIHELKELIKQHQEKQHSIGFVPTMGFLHEGHLTLAKEARDQNDLVVMSIFVNPLQFGPNEDFESYPRDMERDQRLAKEAGVDILFTPDVKEMYANEPSITMTVRKRTDVLCGKKRPGHFDGVVTVLTKLFHLVAPTNAYFGLKDAQQVAVIDAMIKDFFFDLHLVSVPTVREEDGLAKSSRNVYLSDKERQEAPALYRALKKGQSAIENGERDVSRIYQLVEEDILQTSGEIDYIEIYSYPELEPLQQLAGQVIIAIAVKFSRARLIDNVIFHVPESGEKHV.

Residue 30–37 (MGFLHEGH) participates in ATP binding. Catalysis depends on histidine 37, which acts as the Proton donor. Glutamine 61 is a binding site for (R)-pantoate. A beta-alanine-binding site is contributed by glutamine 61. 147 to 150 (GLKD) lines the ATP pocket. Glutamine 153 contacts (R)-pantoate. ATP-binding positions include valine 176 and 184 to 187 (KSSR).

It belongs to the pantothenate synthetase family. In terms of assembly, homodimer.

It is found in the cytoplasm. The enzyme catalyses (R)-pantoate + beta-alanine + ATP = (R)-pantothenate + AMP + diphosphate + H(+). Its pathway is cofactor biosynthesis; (R)-pantothenate biosynthesis; (R)-pantothenate from (R)-pantoate and beta-alanine: step 1/1. Functionally, catalyzes the condensation of pantoate with beta-alanine in an ATP-dependent reaction via a pantoyl-adenylate intermediate. The polypeptide is Pantothenate synthetase (Bacillus pumilus (strain SAFR-032)).